The sequence spans 477 residues: UDP-N-acetylmuramate--L-alanine ligase (477 aa).

Residue 122-128 (GTHGKTT) participates in ATP binding.

The protein belongs to the MurCDEF family.

It is found in the cytoplasm. It carries out the reaction UDP-N-acetyl-alpha-D-muramate + L-alanine + ATP = UDP-N-acetyl-alpha-D-muramoyl-L-alanine + ADP + phosphate + H(+). It functions in the pathway cell wall biogenesis; peptidoglycan biosynthesis. Functionally, cell wall formation. The polypeptide is UDP-N-acetylmuramate--L-alanine ligase (Xylella fastidiosa (strain M12)).